Here is a 169-residue protein sequence, read N- to C-terminus: Lipoprotein signal peptidase (169 aa).

3 consecutive transmembrane segments (helical) span residues tryptophan 12–glycine 32, tryptophan 70–serine 90, and alanine 102–valine 122. Catalysis depends on residues aspartate 123 and aspartate 141. Residues phenylalanine 137–leucine 157 traverse the membrane as a helical segment.

This sequence belongs to the peptidase A8 family.

The protein localises to the cell inner membrane. It carries out the reaction Release of signal peptides from bacterial membrane prolipoproteins. Hydrolyzes -Xaa-Yaa-Zaa-|-(S,diacylglyceryl)Cys-, in which Xaa is hydrophobic (preferably Leu), and Yaa (Ala or Ser) and Zaa (Gly or Ala) have small, neutral side chains.. It functions in the pathway protein modification; lipoprotein biosynthesis (signal peptide cleavage). In terms of biological role, this protein specifically catalyzes the removal of signal peptides from prolipoproteins. This Serratia proteamaculans (strain 568) protein is Lipoprotein signal peptidase.